The chain runs to 129 residues: Histone H2A type 2-C (129 aa).

Residues 1 to 22 (MSGRGKQGGKARAKAKSRSSRA) are disordered. Ser-2 bears the N-acetylserine mark. At Ser-2 the chain carries Phosphoserine; by RPS6KA5. Arg-4 carries the citrulline; alternate modification. A Symmetric dimethylarginine; by PRMT5; alternate modification is found at Arg-4. Lys-6 and Lys-10 each carry N6-(2-hydroxyisobutyryl)lysine; alternate. Lys-6 bears the N6-acetyllysine; alternate mark. Residues 7-19 (QGGKARAKAKSRS) show a composition bias toward basic residues. An N6-lactoyllysine; alternate modification is found at Lys-10. N6-succinyllysine; alternate is present on Lys-10. Glycyl lysine isopeptide (Lys-Gly) (interchain with G-Cter in ubiquitin) cross-links involve residues Lys-14 and Lys-16. Lys-37 carries the post-translational modification N6-(2-hydroxyisobutyryl)lysine; alternate. The residue at position 37 (Lys-37) is an N6-(beta-hydroxybutyryl)lysine; alternate. N6-crotonyllysine; alternate is present on Lys-37. Lys-75 and Lys-76 each carry N6-(2-hydroxyisobutyryl)lysine. An N6-(2-hydroxyisobutyryl)lysine; alternate modification is found at Lys-96. An N6-succinyllysine; alternate modification is found at Lys-96. N6-glutaryllysine; alternate is present on Lys-96. Position 100 is an N6-glutaryllysine (Lys-100). At Gln-105 the chain carries N5-methylglutamine. Lys-119 is subject to N6-(2-hydroxyisobutyryl)lysine; alternate. Lys-119 and Lys-120 each carry N6-crotonyllysine; alternate. Residues Lys-119 and Lys-120 each carry the N6-glutaryllysine; alternate modification. Lys-120 is covalently cross-linked (Glycyl lysine isopeptide (Lys-Gly) (interchain with G-Cter in ubiquitin); alternate). Thr-121 is modified (phosphothreonine; by DCAF1). Phosphoserine is present on Ser-123. Lys-125 is modified (N6-crotonyllysine).

It belongs to the histone H2A family. As to quaternary structure, the nucleosome is a histone octamer containing two molecules each of H2A, H2B, H3 and H4 assembled in one H3-H4 heterotetramer and two H2A-H2B heterodimers. The octamer wraps approximately 147 bp of DNA. In terms of processing, deiminated on Arg-4 in granulocytes upon calcium entry. Post-translationally, monoubiquitination of Lys-120 (H2AK119Ub) by RING1, TRIM37 and RNF2/RING2 complex gives a specific tag for epigenetic transcriptional repression and participates in X chromosome inactivation of female mammals. It is involved in the initiation of both imprinted and random X inactivation. Ubiquitinated H2A is enriched in inactive X chromosome chromatin. Ubiquitination of H2A functions downstream of methylation of 'Lys-27' of histone H3 (H3K27me). H2AK119Ub by RNF2/RING2 can also be induced by ultraviolet and may be involved in DNA repair. Following DNA double-strand breaks (DSBs), it is ubiquitinated through 'Lys-63' linkage of ubiquitin moieties by the E2 ligase UBE2N and the E3 ligases RNF8 and RNF168, leading to the recruitment of repair proteins to sites of DNA damage. Ubiquitination at Lys-14 and Lys-16 (H2AK13Ub and H2AK15Ub, respectively) in response to DNA damage is initiated by RNF168 that mediates monoubiquitination at these 2 sites, and 'Lys-63'-linked ubiquitin are then conjugated to monoubiquitin; RNF8 is able to extend 'Lys-63'-linked ubiquitin chains in vitro. H2AK119Ub and ionizing radiation-induced 'Lys-63'-linked ubiquitination (H2AK13Ub and H2AK15Ub) are distinct events. Phosphorylation on Ser-2 (H2AS1ph) is enhanced during mitosis. Phosphorylation on Ser-2 by RPS6KA5/MSK1 directly represses transcription. Acetylation of H3 inhibits Ser-2 phosphorylation by RPS6KA5/MSK1. Phosphorylation at Thr-121 (H2AT120ph) by DCAF1 is present in the regulatory region of many tumor suppresor genes and down-regulates their transcription. In terms of processing, symmetric dimethylation on Arg-4 by the PRDM1/PRMT5 complex may play a crucial role in the germ-cell lineage. Post-translationally, glutamine methylation at Gln-105 (H2AQ104me) by FBL is specifically dedicated to polymerase I. It is present at 35S ribosomal DNA locus and impairs binding of the FACT complex. Crotonylation (Kcr) is specifically present in male germ cells and marks testis-specific genes in post-meiotic cells, including X-linked genes that escape sex chromosome inactivation in haploid cells. Crotonylation marks active promoters and enhancers and confers resistance to transcriptional repressors. It is also associated with post-meiotically activated genes on autosomes. In terms of processing, lactylated in macrophages by EP300/P300 by using lactoyl-CoA directly derived from endogenous or exogenous lactate, leading to stimulates gene transcription.

The protein localises to the nucleus. It is found in the chromosome. Its function is as follows. Core component of nucleosome. Nucleosomes wrap and compact DNA into chromatin, limiting DNA accessibility to the cellular machineries which require DNA as a template. Histones thereby play a central role in transcription regulation, DNA repair, DNA replication and chromosomal stability. DNA accessibility is regulated via a complex set of post-translational modifications of histones, also called histone code, and nucleosome remodeling. This chain is Histone H2A type 2-C, found in Bos taurus (Bovine).